The chain runs to 876 residues: Alanine--tRNA ligase (876 aa).

4 residues coordinate Zn(2+): histidine 565, histidine 569, cysteine 667, and histidine 671.

It belongs to the class-II aminoacyl-tRNA synthetase family. The cofactor is Zn(2+).

The protein resides in the cytoplasm. The enzyme catalyses tRNA(Ala) + L-alanine + ATP = L-alanyl-tRNA(Ala) + AMP + diphosphate. In terms of biological role, catalyzes the attachment of alanine to tRNA(Ala) in a two-step reaction: alanine is first activated by ATP to form Ala-AMP and then transferred to the acceptor end of tRNA(Ala). Also edits incorrectly charged Ser-tRNA(Ala) and Gly-tRNA(Ala) via its editing domain. The chain is Alanine--tRNA ligase from Desulfosudis oleivorans (strain DSM 6200 / JCM 39069 / Hxd3) (Desulfococcus oleovorans).